A 351-amino-acid polypeptide reads, in one-letter code: Putative F-box protein At4g09790 (351 aa).

The 51-residue stretch at 1 to 51 folds into the F-box domain; sequence MTTICDLPRDLVARILSRVPLTSMRRVRFTCKRWNTISKDPSFAKTHFGKA.

In Arabidopsis thaliana (Mouse-ear cress), this protein is Putative F-box protein At4g09790.